We begin with the raw amino-acid sequence, 544 residues long: Chaperonin GroEL 1 (544 aa).

ATP contacts are provided by residues 29-32 (TLGP), 86-90 (DGTTT), glycine 413, and aspartate 495. A disordered region spans residues 525–544 (PEPKTNTPASSGSGMSDYDY). Positions 528–538 (KTNTPASSGSG) are enriched in polar residues.

It belongs to the chaperonin (HSP60) family. Forms a cylinder of 14 subunits composed of two heptameric rings stacked back-to-back. Interacts with the co-chaperonin GroES.

Its subcellular location is the cytoplasm. It carries out the reaction ATP + H2O + a folded polypeptide = ADP + phosphate + an unfolded polypeptide.. In terms of biological role, together with its co-chaperonin GroES, plays an essential role in assisting protein folding. The GroEL-GroES system forms a nano-cage that allows encapsulation of the non-native substrate proteins and provides a physical environment optimized to promote and accelerate protein folding. This Synechococcus sp. (strain JA-2-3B'a(2-13)) (Cyanobacteria bacterium Yellowstone B-Prime) protein is Chaperonin GroEL 1.